The following is a 426-amino-acid chain: Serine--tRNA ligase (426 aa).

233–235 (TAE) is a binding site for L-serine. Residue 264–266 (RSE) participates in ATP binding. Glu287 contributes to the L-serine binding site. Position 351–354 (351–354 (EISS)) interacts with ATP. Residue Ser387 participates in L-serine binding.

The protein belongs to the class-II aminoacyl-tRNA synthetase family. Type-1 seryl-tRNA synthetase subfamily. In terms of assembly, homodimer. The tRNA molecule binds across the dimer.

It localises to the cytoplasm. It catalyses the reaction tRNA(Ser) + L-serine + ATP = L-seryl-tRNA(Ser) + AMP + diphosphate + H(+). It carries out the reaction tRNA(Sec) + L-serine + ATP = L-seryl-tRNA(Sec) + AMP + diphosphate + H(+). It functions in the pathway aminoacyl-tRNA biosynthesis; selenocysteinyl-tRNA(Sec) biosynthesis; L-seryl-tRNA(Sec) from L-serine and tRNA(Sec): step 1/1. In terms of biological role, catalyzes the attachment of serine to tRNA(Ser). Is also able to aminoacylate tRNA(Sec) with serine, to form the misacylated tRNA L-seryl-tRNA(Sec), which will be further converted into selenocysteinyl-tRNA(Sec). The sequence is that of Serine--tRNA ligase from Pseudomonas putida (strain ATCC 47054 / DSM 6125 / CFBP 8728 / NCIMB 11950 / KT2440).